A 357-amino-acid chain; its full sequence is tRNA/tmRNA (uracil-C(5))-methyltransferase (357 aa).

Gln-180, Tyr-209, Asn-214, Glu-230, and Asp-290 together coordinate S-adenosyl-L-methionine. The active-site Nucleophile is the Cys-315. Catalysis depends on Glu-349, which acts as the Proton acceptor.

This sequence belongs to the class I-like SAM-binding methyltransferase superfamily. RNA M5U methyltransferase family. TrmA subfamily.

It catalyses the reaction uridine(54) in tRNA + S-adenosyl-L-methionine = 5-methyluridine(54) in tRNA + S-adenosyl-L-homocysteine + H(+). The enzyme catalyses uridine(341) in tmRNA + S-adenosyl-L-methionine = 5-methyluridine(341) in tmRNA + S-adenosyl-L-homocysteine + H(+). In terms of biological role, dual-specificity methyltransferase that catalyzes the formation of 5-methyluridine at position 54 (m5U54) in all tRNAs, and that of position 341 (m5U341) in tmRNA (transfer-mRNA). The chain is tRNA/tmRNA (uracil-C(5))-methyltransferase from Campylobacter jejuni subsp. jejuni serotype O:23/36 (strain 81-176).